Reading from the N-terminus, the 272-residue chain is Ribosome maturation factor RimP (272 aa).

A disordered region spans residues 209–272 (QNLGILPPPP…RGDIDPPEGD (64 aa)). A compositionally biased stretch (basic and acidic residues) spans 250–266 (NTKEHRLAAERLRRGDI).

The protein belongs to the RimP family.

The protein resides in the cytoplasm. Required for maturation of 30S ribosomal subunits. The polypeptide is Ribosome maturation factor RimP (Rhodopseudomonas palustris (strain BisA53)).